Reading from the N-terminus, the 248-residue chain is uncharacterized protein (248 aa).

8 to 32 is an NADP(+) binding site; sequence IVTGAAQGIGQAYAQALAREGASVV. S143 contacts substrate. Y153 functions as the Proton acceptor in the catalytic mechanism.

This sequence belongs to the short-chain dehydrogenases/reductases (SDR) family.

This is an uncharacterized protein from Mycobacterium tuberculosis (strain CDC 1551 / Oshkosh).